The following is a 722-amino-acid chain: MRSPCNARAADNFFLERVAQAEIRTRLLNLEERLILYRIPQMPGEVTQAEVASVAQNGRVRQTPCYGINPLLQKALSTVAGLNLFLIPQKRMRPSAQLLTTDLMLCALYSFFTHGENLLKVDGTFRKKAFVMFQALFPVDPDVVSVALPAYLQRAGEERGTSRLLQEGRRVLEHLGLIVCESAQVHVQDKRWASFFSLTALERAVYLTVASTAILRKEVLVQRAQALRTLLCVLHPDAQYAPEDLTRVYRILVEEAAPSVAADFFSSLSLSKDTMLQKRKGALHDSSVFSMQSAITAIRTAQLFGLLCVKDGLCALNEALFKGQYTRGPGMVLSATAELTIFPDGDMQGVLPILSCAHVCSLQTVATFELNKKSCTTGFARGLTVQALAQALECKTGEQVPQNILSSFRQWYAQITALTLRRGFVMQVDSSQQAFFESGGPLHPLVRTRLAEGVYFFDECQECMLYQALARARLSYLCEPIDTATPLFRPGEQGARALHVPSFSFPVRSARGVSEESTRDFAHLGAFVLETPNVSCTHSAADTPSISEQTGGVAHVQSEEDVDPSTSGATGKYWDKAQWRKVQRMRRAVRLQRLKEFEAHLQQLKLDATEQTELRARLQRGLILDRMQLSSETIRRERTEASGVDFLGKYRLAECALRSGALLEIETSSGQSVHKIVGTVCAIEKCEEDALLHVCVHAELPPERVSIARASRIVLLKNSIFS.

This is an uncharacterized protein from Treponema pallidum (strain Nichols).